We begin with the raw amino-acid sequence, 132 residues long: Prefoldin subunit alpha (132 aa).

Belongs to the prefoldin subunit alpha family. As to quaternary structure, heterohexamer of two alpha and four beta subunits.

It localises to the cytoplasm. Functionally, molecular chaperone capable of stabilizing a range of proteins. Seems to fulfill an ATP-independent, HSP70-like function in archaeal de novo protein folding. This is Prefoldin subunit alpha from Pyrobaculum islandicum (strain DSM 4184 / JCM 9189 / GEO3).